We begin with the raw amino-acid sequence, 160 residues long: MRCPYCQCEDTQVKDSRPAEEGAVIRRRRVCSVCGGRFTTFERVQLRELLVLKKSGRRELFNRDKLMKSVDLAMRKRNIDPDRIERAISGIVRRLESLGEPEIASEKIGYLVMESLKRIDDIAYIRFASVYRDFRNASDFHDIIDELSKDVADIESCFDE.

A zinc finger lies at Cys3–Cys34. The 91-residue stretch at Leu49–Asp139 folds into the ATP-cone domain.

The protein belongs to the NrdR family. Requires Zn(2+) as cofactor.

Its function is as follows. Negatively regulates transcription of bacterial ribonucleotide reductase nrd genes and operons by binding to NrdR-boxes. This chain is Transcriptional repressor NrdR, found in Bartonella bacilliformis (strain ATCC 35685 / KC583 / Herrer 020/F12,63).